The sequence spans 458 residues: GTPase Der (458 aa).

2 EngA-type G domains span residues 4-169 (PSIA…PKDL) and 178-353 (IMMS…TQHR). GTP is bound by residues 10-17 (GRPNVGKS), 57-61 (DTGGL), 120-123 (NKCE), 184-191 (GRPNVGKS), 231-235 (DTAGI), and 296-299 (NKWD). Residues 354-439 (RRVTTSVVNE…PIILLWRGKQ (86 aa)) enclose the KH-like domain.

Belongs to the TRAFAC class TrmE-Era-EngA-EngB-Septin-like GTPase superfamily. EngA (Der) GTPase family. As to quaternary structure, associates with the 50S ribosomal subunit.

GTPase that plays an essential role in the late steps of ribosome biogenesis. This is GTPase Der from Prochlorococcus marinus subsp. pastoris (strain CCMP1986 / NIES-2087 / MED4).